Here is a 333-residue protein sequence, read N- to C-terminus: Dipeptide transport system permease protein DppB (333 aa).

The next 6 membrane-spanning stretches (helical) occupy residues 9–29 (ILMVIPTFIAITLITFALVHF), 103–123 (AFFALFWSLLGGIILGTIAAV), 136–156 (ASLTGYSMPIFWWGLILILYV), 197–217 (AVKSLILPAIVLGTVPLAIIT), 256–276 (LIPVVTVVGLIVAQLLSGAVL), and 306–326 (VLIIATIIIVVNLTVDLLYGV). Residues 96 to 328 (FPATAELAFF…TVDLLYGVVN (233 aa)) enclose the ABC transmembrane type-1 domain.

It belongs to the binding-protein-dependent transport system permease family. OppBC subfamily.

The protein resides in the cell inner membrane. In terms of biological role, part of the ABC transporter DppBCDF involved in dipeptide transport. Responsible for the translocation of the substrate across the membrane. This chain is Dipeptide transport system permease protein DppB (dppB), found in Haemophilus influenzae (strain ATCC 51907 / DSM 11121 / KW20 / Rd).